The following is a 185-amino-acid chain: MAAAARVSEVKAEGLLRGACAALAAAAALLVGLSTQTETVLLVRKKATVKDVQALWVLAMAAAAAAGYHLLQLLKCLYLGRVGGARPCRRSSRALAWTCLLLDKACAYTTFATTVAAAQACVVALDGAHAVQWTKLCNIYTRFCEQVAGSLVLGMLAAVGTAVLSAASARNVFRHYSSLETYAAH.

Topologically, residues 1–13 are cytoplasmic; that stretch reads MAAAARVSEVKAE. The helical transmembrane segment at 14–34 threads the bilayer; that stretch reads GLLRGACAALAAAAALLVGLS. At 35 to 53 the chain is on the extracellular side; the sequence is TQTETVLLVRKKATVKDVQ. The chain crosses the membrane as a helical span at residues 54-74; it reads ALWVLAMAAAAAAGYHLLQLL. Topologically, residues 75 to 104 are cytoplasmic; it reads KCLYLGRVGGARPCRRSSRALAWTCLLLDK. A helical membrane pass occupies residues 105–125; it reads ACAYTTFATTVAAAQACVVAL. Over 126 to 146 the chain is Extracellular; sequence DGAHAVQWTKLCNIYTRFCEQ. A helical transmembrane segment spans residues 147 to 167; that stretch reads VAGSLVLGMLAAVGTAVLSAA. Residues 168–185 are Cytoplasmic-facing; that stretch reads SARNVFRHYSSLETYAAH.

The protein belongs to the Casparian strip membrane proteins (CASP) family. Homodimer and heterodimers.

It is found in the cell membrane. This Zea mays (Maize) protein is CASP-like protein 2C3.